The following is a 309-amino-acid chain: Zinc transporter ZIP2 (309 aa).

The Extracellular portion of the chain corresponds to 1 to 8; the sequence is MEQLLGIK. A helical transmembrane segment spans residues 9 to 29; it reads LGCLFALLALTLGCGLTPICF. Residues 30–46 are Cytoplasmic-facing; it reads KWFQIDAARGHHRLVLR. Residues 47–67 traverse the membrane as a helical segment; that stretch reads LLGCISAGVFLGAGFMHMTAE. Residues 68–103 lie on the Extracellular side of the membrane; the sequence is ALEEIESQIQKFMVQNRSASERNSSGDADSAHMEYP. Residues 104-124 traverse the membrane as a helical segment; it reads YGELIISLGFFFVFFLESLAL. At 125–164 the chain is on the cytoplasmic side; that stretch reads QCCPGAAGGSTVQDEEWGGAHIFELHSHGHLPSPSKGPLR. The chain crosses the membrane as a helical span at residues 165–185; it reads ALVLLLSLSFHSVFEGLAVGL. Histidine 175 and glutamate 179 together coordinate Zn(2+). The Extracellular segment spans residues 186 to 189; it reads QPTV. A helical membrane pass occupies residues 190-210; that stretch reads AATVQLCLAVLAHKGLVVFGV. A Zn(2+)-binding site is contributed by histidine 202. Residues 211–224 lie on the Cytoplasmic side of the membrane; that stretch reads GMRLVHLGTSSRWA. Residues 225–245 form a helical membrane-spanning segment; sequence VFSILLLALMSPLGLAVGLAV. The Extracellular portion of the chain corresponds to 246–258; it reads TGGDSEGGRGLAQ. The helical transmembrane segment at 259–279 threads the bilayer; that stretch reads AVLEGVAAGTFLYVTFLEILP. Glutamate 276 is a binding site for Zn(2+). Over 280-288 the chain is Cytoplasmic; it reads RELASPEAP. Residues 289-309 traverse the membrane as a helical segment; it reads LAKWSCVAAGFAFMAFIALWA.

This sequence belongs to the ZIP transporter (TC 2.A.5) family. In terms of tissue distribution, expressed only in prostate and uterine epithelial cells.

The protein localises to the cell membrane. The catalysed reaction is Zn(2+)(in) = Zn(2+)(out). The enzyme catalyses Cd(2+)(in) = Cd(2+)(out). Its activity is regulated as follows. Activity is increased at acidic pH (6.5). Inhibited in the presence of high extracellular K(+). In terms of biological role, transporter for the divalent cation Zn(2+). Mediates the influx of Zn(2+) into cells from extracellular space. The Zn(2+) uniporter activity is independent of H(+)-driving force, but is modulated by extracellular pH and membrane potential. Also transports other divalent cations Zn(2+), Cd2(+), Cu2(+), Co2(+) in the order of decreasing affinity, respectively. In the skin, aids in the differentiation of keratinocytes in the epidermis. The protein is Zinc transporter ZIP2 of Homo sapiens (Human).